Reading from the N-terminus, the 93-residue chain is Pyrimidine/purine nucleoside phosphorylase (93 aa).

This sequence belongs to the nucleoside phosphorylase PpnP family.

It catalyses the reaction a purine D-ribonucleoside + phosphate = a purine nucleobase + alpha-D-ribose 1-phosphate. The enzyme catalyses adenosine + phosphate = alpha-D-ribose 1-phosphate + adenine. The catalysed reaction is cytidine + phosphate = cytosine + alpha-D-ribose 1-phosphate. It carries out the reaction guanosine + phosphate = alpha-D-ribose 1-phosphate + guanine. It catalyses the reaction inosine + phosphate = alpha-D-ribose 1-phosphate + hypoxanthine. The enzyme catalyses thymidine + phosphate = 2-deoxy-alpha-D-ribose 1-phosphate + thymine. The catalysed reaction is uridine + phosphate = alpha-D-ribose 1-phosphate + uracil. It carries out the reaction xanthosine + phosphate = alpha-D-ribose 1-phosphate + xanthine. Functionally, catalyzes the phosphorolysis of diverse nucleosides, yielding D-ribose 1-phosphate and the respective free bases. Can use uridine, adenosine, guanosine, cytidine, thymidine, inosine and xanthosine as substrates. Also catalyzes the reverse reactions. The sequence is that of Pyrimidine/purine nucleoside phosphorylase from Hahella chejuensis (strain KCTC 2396).